Consider the following 815-residue polypeptide: Lon protease 1 (815 aa).

In terms of domain architecture, Lon N-terminal spans 19–212; that stretch reads MPLLPLRDIV…KLFGQIRSEI (194 aa). An ATP-binding site is contributed by 364-371; the sequence is GPPGVGKT. The Lon proteolytic domain maps to 601–782; it reads KDEIGLAVGL…DDVLRKAMVV (182 aa). Catalysis depends on residues Ser-688 and Lys-731. Residues 793-815 form a disordered region; it reads EAGAQQAVMFEQKPPAADEIRAH.

The protein belongs to the peptidase S16 family. As to quaternary structure, homohexamer. Organized in a ring with a central cavity.

It localises to the cytoplasm. The catalysed reaction is Hydrolysis of proteins in presence of ATP.. ATP-dependent serine protease that mediates the selective degradation of mutant and abnormal proteins as well as certain short-lived regulatory proteins. Required for cellular homeostasis and for survival from DNA damage and developmental changes induced by stress. Degrades polypeptides processively to yield small peptide fragments that are 5 to 10 amino acids long. Binds to DNA in a double-stranded, site-specific manner. This chain is Lon protease 1, found in Syntrophobacter fumaroxidans (strain DSM 10017 / MPOB).